A 59-amino-acid chain; its full sequence is Putative potassium channel toxin Ts25 (59 aa).

Positions 1-22 (MKAFYGILIIFILISMIHLSQQ) are cleaved as a signal peptide. Cystine bridges form between Cys-29–Cys-50, Cys-35–Cys-55, and Cys-39–Cys-57.

The protein belongs to the short scorpion toxin superfamily. Potassium channel inhibitor family. Alpha-KTx 04 subfamily. Expressed by the venom gland.

Its subcellular location is the secreted. In terms of biological role, potently blocks Kv1.1/KCNA1 (85%), Kv1.2/KCNA2 (91%), Kv1.3/KCNA3 (89%), Kv1.6/KCNA6 (94%), and Shaker (97%). This chain is Putative potassium channel toxin Ts25, found in Tityus serrulatus (Brazilian scorpion).